The chain runs to 380 residues: Cytochrome b (380 aa).

The next 4 helical transmembrane spans lie at 33–53, 77–98, 113–133, and 178–198; these read FGSL…FLAM, WLIR…YLHV, WNIG…GYVL, and FFAF…IHLL. Residues His-83 and His-97 each coordinate heme b. Positions 182 and 196 each coordinate heme b. His-201 provides a ligand contact to a ubiquinone. The next 4 membrane-spanning stretches (helical) occupy residues 226–246, 288–308, 320–340, and 347–367; these read YKDL…ALFS, LGGV…PMLH, PSQI…WIGG, and FVLI…IALP.

Belongs to the cytochrome b family. As to quaternary structure, the cytochrome bc1 complex contains 3 respiratory subunits (MT-CYB, CYC1 and UQCRFS1), 2 core proteins (UQCRC1 and UQCRC2) and probably 6 low-molecular weight proteins. Heme b is required as a cofactor.

Its subcellular location is the mitochondrion inner membrane. Component of the ubiquinol-cytochrome c reductase complex (complex III or cytochrome b-c1 complex) that is part of the mitochondrial respiratory chain. The b-c1 complex mediates electron transfer from ubiquinol to cytochrome c. Contributes to the generation of a proton gradient across the mitochondrial membrane that is then used for ATP synthesis. This chain is Cytochrome b (mt-cyb), found in Acipenser sinensis (Chinese sturgeon).